The primary structure comprises 147 residues: HTH-type transcriptional regulator MgrA (147 aa).

The region spanning 8–139 (KEQLCFSLYN…LNRLLGKVIH (132 aa)) is the HTH marR-type domain. Positions 55–78 (VKKVVTELALDTGTVSPLLKRMEQ) form a DNA-binding region, H-T-H motif.

It is found in the cytoplasm. Functionally, regulatory protein involved in autolytic activity, multidrug resistance and virulence. Controls autolysis by inactivating LytM, LytN (autolysins) and SarV (autolysis activator) and activating ArlRS, LrgAB and LytSR (autolysis inhibitors). Acts as a dual regulator for resistance to multiple drugs by inactivating NorB and tet38 and activating NorA. Positively controls the expression of virulence accessory gene regulator (agr) to promote alpha-hemolysin (hla) transcription and down-regulates staphylococcal accessory regulator (sarS), leading to repression of surface protein A (spa). Binds directly to hla promoter to augment its activation. Binds to sarS promoter to down-regulate spa expression. The polypeptide is HTH-type transcriptional regulator MgrA (mgrA) (Staphylococcus aureus (strain NCTC 8325 / PS 47)).